We begin with the raw amino-acid sequence, 380 residues long: Glucose-1-phosphate adenylyltransferase (380 aa).

Residues Gly-164, 179-180, and Ser-190 each bind alpha-D-glucose 1-phosphate; that span reads EK.

This sequence belongs to the bacterial/plant glucose-1-phosphate adenylyltransferase family. As to quaternary structure, homotetramer.

The catalysed reaction is alpha-D-glucose 1-phosphate + ATP + H(+) = ADP-alpha-D-glucose + diphosphate. It functions in the pathway glycan biosynthesis; glycogen biosynthesis. In terms of biological role, involved in the biosynthesis of ADP-glucose, a building block required for the elongation reactions to produce glycogen. Catalyzes the reaction between ATP and alpha-D-glucose 1-phosphate (G1P) to produce pyrophosphate and ADP-Glc. The chain is Glucose-1-phosphate adenylyltransferase from Ligilactobacillus salivarius (strain UCC118) (Lactobacillus salivarius).